We begin with the raw amino-acid sequence, 310 residues long: Transcription initiation factor IIB (310 aa).

The TFIIB-type zinc-finger motif lies at 9 to 41 (DKQTVCPECGSTELIGDYERAEVVCAHCGLVID). Zn(2+)-binding residues include C14, C17, C33, and C36. 2 repeat units span residues 127 to 210 (SELD…TREL) and 221 to 302 (DYVP…ELTE).

The protein belongs to the TFIIB family.

Stabilizes TBP binding to an archaeal box-A promoter. Also responsible for recruiting RNA polymerase II to the pre-initiation complex (DNA-TBP-TFIIB). The sequence is that of Transcription initiation factor IIB from Methanobrevibacter smithii (strain ATCC 35061 / DSM 861 / OCM 144 / PS).